The chain runs to 384 residues: S-adenosylmethionine synthase (384 aa).

An ATP-binding site is contributed by His15. Residue Asp17 participates in Mg(2+) binding. Glu43 lines the K(+) pocket. The L-methionine site is built by Glu56 and Gln99. Residues 99–109 form a flexible loop region; that stretch reads QSADINQGVDR. Residues 164–166, 230–231, Asp239, 245–246, Ala262, and Lys266 contribute to the ATP site; these read DAK, RF, and RK. Residue Asp239 participates in L-methionine binding. Lys270 provides a ligand contact to L-methionine.

It belongs to the AdoMet synthase family. As to quaternary structure, homotetramer; dimer of dimers. The cofactor is Mg(2+). Requires K(+) as cofactor.

The protein resides in the cytoplasm. It catalyses the reaction L-methionine + ATP + H2O = S-adenosyl-L-methionine + phosphate + diphosphate. It functions in the pathway amino-acid biosynthesis; S-adenosyl-L-methionine biosynthesis; S-adenosyl-L-methionine from L-methionine: step 1/1. In terms of biological role, catalyzes the formation of S-adenosylmethionine (AdoMet) from methionine and ATP. The overall synthetic reaction is composed of two sequential steps, AdoMet formation and the subsequent tripolyphosphate hydrolysis which occurs prior to release of AdoMet from the enzyme. This chain is S-adenosylmethionine synthase, found in Haemophilus influenzae (strain PittGG).